The primary structure comprises 166 residues: Protein-export protein SecB (166 aa).

The protein belongs to the SecB family. Homotetramer, a dimer of dimers. One homotetramer interacts with 1 SecA dimer.

It localises to the cytoplasm. In terms of biological role, one of the proteins required for the normal export of preproteins out of the cell cytoplasm. It is a molecular chaperone that binds to a subset of precursor proteins, maintaining them in a translocation-competent state. It also specifically binds to its receptor SecA. The protein is Protein-export protein SecB of Rhizorhabdus wittichii (strain DSM 6014 / CCUG 31198 / JCM 15750 / NBRC 105917 / EY 4224 / RW1) (Sphingomonas wittichii).